We begin with the raw amino-acid sequence, 367 residues long: Heat-inducible transcription repressor HrcA (367 aa).

This sequence belongs to the HrcA family.

Functionally, negative regulator of class I heat shock genes (grpE-dnaK-dnaJ and groELS operons). Prevents heat-shock induction of these operons. The polypeptide is Heat-inducible transcription repressor HrcA (Acaryochloris marina (strain MBIC 11017)).